The chain runs to 689 residues: DNA ligase (689 aa).

Residues 40 to 44, 89 to 90, and E121 contribute to the NAD(+) site; these read DAEYD and SL. K123 acts as the N6-AMP-lysine intermediate in catalysis. R144, E179, K295, and K319 together coordinate NAD(+). Positions 413, 416, 431, and 437 each coordinate Zn(2+). Residues 610–689 enclose the BRCT domain; it reads REQSSLTGKI…AEWLTLVRDI (80 aa).

The protein belongs to the NAD-dependent DNA ligase family. LigA subfamily. Mg(2+) serves as cofactor. Requires Mn(2+) as cofactor.

The catalysed reaction is NAD(+) + (deoxyribonucleotide)n-3'-hydroxyl + 5'-phospho-(deoxyribonucleotide)m = (deoxyribonucleotide)n+m + AMP + beta-nicotinamide D-nucleotide.. DNA ligase that catalyzes the formation of phosphodiester linkages between 5'-phosphoryl and 3'-hydroxyl groups in double-stranded DNA using NAD as a coenzyme and as the energy source for the reaction. It is essential for DNA replication and repair of damaged DNA. This is DNA ligase from Rickettsia bellii (strain RML369-C).